The chain runs to 326 residues: Probable sodium/potassium-transporting ATPase subunit beta-3 (326 aa).

The Cytoplasmic portion of the chain corresponds to 1 to 59 (MMSSRTRKIYLFVFMFISTSLQLMNGEAKAEPETFRQFLYNKQKGTVLGRTGTSWCQIT). Residues 60-80 (VFYIIFYIFLSAFFIGCLAIF) form a helical; Signal-anchor for type II membrane protein membrane-spanning segment. At 81–326 (LKTLDPKVPR…DKKPVAAPAA (246 aa)) the chain is on the lumenal side. N-linked (GlcNAc...) asparagine glycosylation is found at Asn-144 and Asn-147. A disulfide bond links Cys-234 and Cys-291.

It belongs to the X(+)/potassium ATPases subunit beta family. As to quaternary structure, the sodium/potassium-transporting ATPase is composed of a catalytic alpha subunit, an auxiliary non-catalytic beta subunit and an additional regulatory subunit.

It is found in the cell membrane. In terms of biological role, this is the non-catalytic component of the active enzyme, which catalyzes the hydrolysis of ATP coupled with the exchange of Na(+) and K(+) ions across the plasma membrane. The beta subunit regulates, through assembly of alpha/beta heterodimers, the number of sodium pumps transported to the plasma membrane. Implicated in genomic response to various soil bacteria that affects fitness, lifespan and brood size. This Caenorhabditis briggsae protein is Probable sodium/potassium-transporting ATPase subunit beta-3 (nkb-3).